We begin with the raw amino-acid sequence, 1333 residues long: Xanthine dehydrogenase/oxidase (1333 aa).

The 2Fe-2S ferredoxin-type domain occupies 4–91 (DKLVFFVNGR…HVAVTTVEGI (88 aa)). Residues C43, C48, C51, C73, C113, C116, C148, and C150 each coordinate [2Fe-2S] cluster. Residues 229-414 (FEGERVTWIQ…LSIEIPYSRE (186 aa)) form the FAD-binding PCMH-type domain. Residues 257 to 264 (LVVGNTEI), F337, 347 to 351 (SVGGN), D360, L404, and K422 each bind FAD. 2 disulfide bridges follow: C509–C1318 and C536–C993. The Mo-molybdopterin site is built by Q768 and F799. E803 and R881 together coordinate substrate. R913 contacts Mo-molybdopterin. Positions 915 and 1011 each coordinate substrate. A1080 lines the Mo-molybdopterin pocket. Catalysis depends on E1262, which acts as the Proton acceptor.

Belongs to the xanthine dehydrogenase family. In terms of assembly, homodimer. Interacts with BTN1A1. It depends on [2Fe-2S] cluster as a cofactor. FAD serves as cofactor. Mo-molybdopterin is required as a cofactor. Post-translationally, subject to partial proteolysis; this alters the enzyme from the dehydrogenase form (D) to the oxidase form (O). Contains sulfhydryl groups that are easily oxidized (in vitro); this alters the enzyme from the dehydrogenase form (D) to the oxidase form (O). Detected in milk (at protein level).

The protein localises to the cytoplasm. Its subcellular location is the peroxisome. The protein resides in the secreted. The catalysed reaction is xanthine + NAD(+) + H2O = urate + NADH + H(+). It catalyses the reaction hypoxanthine + NAD(+) + H2O = xanthine + NADH + H(+). The enzyme catalyses xanthine + O2 + H2O = urate + H2O2. Its activity is regulated as follows. Can be converted from the dehydrogenase form (D) to the oxidase form (O) irreversibly by proteolysis or reversibly through the oxidation of sulfhydryl groups. In terms of biological role, key enzyme in purine degradation. Catalyzes the oxidation of hypoxanthine to xanthine. Catalyzes the oxidation of xanthine to uric acid. Contributes to the generation of reactive oxygen species. Has also low oxidase activity towards aldehydes (in vitro). The protein is Xanthine dehydrogenase/oxidase (XDH) of Homo sapiens (Human).